The chain runs to 597 residues: Protein unc-93 homolog B1 (597 aa).

A disordered region spans residues 1 to 29; the sequence is MEAEPPLYPMAGAAGPQGDEDLLGVPDGP. Helical transmembrane passes span 64 to 84, 110 to 130, 132 to 152, 160 to 180, and 223 to 243; these read VLAASAGGMLTYGVYLGLLQM, KMLMGINVTPIAALLYTPVLI, FFGTKWMMFLAVGIYALFVST, TLVPSAVALGMAIVPLWASMG, and IFYSFFHLSFACAQLPMIYFL. N-linked (GlcNAc...) asparagine glycans are attached at residues Asn-251 and Asn-272. 5 helical membrane passes run 285-305, 343-363, 378-398, 403-423, and 428-448; these read LIVVESVLMAVAFLAMLLVLG, LVPFFIYSGFEVLFACTGIAL, LLVAYSLGASAASLLGLLGLW, VPLVAGAGVHLLLTFILFFWA, and VLQHSWILYVAAALWGVGSAL. N-linked (GlcNAc...) asparagine glycosylation occurs at Asn-449. A run of 2 helical transmembrane segments spans residues 469–489 and 491–511; these read FIFTIYHWWQAVAIFTVYLGS and LHMKAKLAVLLVTLVAAAVSY. The tract at residues 522–597 is disordered; it reads VAPRQPRIPR…AQGGDGPEEQ (76 aa). A phosphoserine mark is found at Ser-547 and Ser-550.

It belongs to the unc-93 family. In terms of assembly, interacts with TLR3, TLR5, TLR7, and TLR9 (probably via transmembrane domain). N-glycosylated. As to expression, expressed in plasmocytoid dendritic cells (at protein level). Highly expressed in antigen-presenting cells. Expressed in heart, and at lower level in kidney. Expressed at low level in other tissues.

The protein localises to the endoplasmic reticulum membrane. Its subcellular location is the endosome. The protein resides in the lysosome. It is found in the cytoplasmic vesicle. It localises to the phagosome. Plays an important role in innate and adaptive immunity by regulating nucleotide-sensing Toll-like receptor (TLR) signaling. Required for the transport of a subset of TLRs (including TLR3, TLR7 and TLR9) from the endoplasmic reticulum to endolysosomes where they can engage pathogen nucleotides and activate signaling cascades. May play a role in autoreactive B-cells removal. The protein is Protein unc-93 homolog B1 of Homo sapiens (Human).